A 137-amino-acid polypeptide reads, in one-letter code: Small ribosomal subunit protein uS12 (137 aa).

2 disordered regions span residues methionine 1–serine 21 and lysine 33–lysine 57.

This sequence belongs to the universal ribosomal protein uS12 family. In terms of assembly, part of the 30S ribosomal subunit. Contacts proteins S8 and S17. May interact with IF1 in the 30S initiation complex.

Its function is as follows. With S4 and S5 plays an important role in translational accuracy. In terms of biological role, interacts with and stabilizes bases of the 16S rRNA that are involved in tRNA selection in the A site and with the mRNA backbone. Located at the interface of the 30S and 50S subunits, it traverses the body of the 30S subunit contacting proteins on the other side and probably holding the rRNA structure together. The combined cluster of proteins S8, S12 and S17 appears to hold together the shoulder and platform of the 30S subunit. The protein is Small ribosomal subunit protein uS12 of Streptococcus pyogenes serotype M1.